Consider the following 202-residue polypeptide: Ras-related protein RABD2c (202 aa).

Residues G15–C23, Y33–T40, D63–Q67, N121–D124, and S151–K153 each bind GTP. The short motif at Y37 to F45 is the Effector region element. A disordered region spans residues A174–S202. Polar residues predominate over residues P192 to S202. Residues C199 and C200 are each lipidated (S-geranylgeranyl cysteine).

The protein belongs to the small GTPase superfamily. Rab family.

The protein localises to the cell membrane. The protein resides in the golgi apparatus. It localises to the trans-Golgi network membrane. It is found in the golgi apparatus membrane. Protein transport. Regulator of membrane traffic from the Golgi apparatus towards the endoplasmic reticulum (ER). This is Ras-related protein RABD2c (RABD2C) from Arabidopsis thaliana (Mouse-ear cress).